A 270-amino-acid chain; its full sequence is Putative phosphoenolpyruvate synthase regulatory protein (270 aa).

Residue 151–158 (GVSRCGKT) participates in ADP binding.

Belongs to the pyruvate, phosphate/water dikinase regulatory protein family. PSRP subfamily.

It carries out the reaction [pyruvate, water dikinase] + ADP = [pyruvate, water dikinase]-phosphate + AMP + H(+). The enzyme catalyses [pyruvate, water dikinase]-phosphate + phosphate + H(+) = [pyruvate, water dikinase] + diphosphate. Its function is as follows. Bifunctional serine/threonine kinase and phosphorylase involved in the regulation of the phosphoenolpyruvate synthase (PEPS) by catalyzing its phosphorylation/dephosphorylation. In Methylobacillus flagellatus (strain ATCC 51484 / DSM 6875 / VKM B-1610 / KT), this protein is Putative phosphoenolpyruvate synthase regulatory protein.